We begin with the raw amino-acid sequence, 356 residues long: Histidinol-phosphate aminotransferase (356 aa).

An N6-(pyridoxal phosphate)lysine modification is found at lysine 214.

This sequence belongs to the class-II pyridoxal-phosphate-dependent aminotransferase family. Histidinol-phosphate aminotransferase subfamily. As to quaternary structure, homodimer. The cofactor is pyridoxal 5'-phosphate.

It carries out the reaction L-histidinol phosphate + 2-oxoglutarate = 3-(imidazol-4-yl)-2-oxopropyl phosphate + L-glutamate. Its pathway is amino-acid biosynthesis; L-histidine biosynthesis; L-histidine from 5-phospho-alpha-D-ribose 1-diphosphate: step 7/9. The polypeptide is Histidinol-phosphate aminotransferase (Aromatoleum aromaticum (strain DSM 19018 / LMG 30748 / EbN1) (Azoarcus sp. (strain EbN1))).